We begin with the raw amino-acid sequence, 443 residues long: Thymidine phosphorylase (443 aa).

It belongs to the thymidine/pyrimidine-nucleoside phosphorylase family. As to quaternary structure, homodimer.

The enzyme catalyses thymidine + phosphate = 2-deoxy-alpha-D-ribose 1-phosphate + thymine. It participates in pyrimidine metabolism; dTMP biosynthesis via salvage pathway; dTMP from thymine: step 1/2. Functionally, the enzymes which catalyze the reversible phosphorolysis of pyrimidine nucleosides are involved in the degradation of these compounds and in their utilization as carbon and energy sources, or in the rescue of pyrimidine bases for nucleotide synthesis. The protein is Thymidine phosphorylase of Aliivibrio fischeri (strain ATCC 700601 / ES114) (Vibrio fischeri).